Reading from the N-terminus, the 550-residue chain is Probable acyl-activating enzyme 9 (550 aa).

The protein belongs to the ATP-dependent AMP-binding enzyme family. Expressed in leaves, flowers and developing seeds.

In terms of biological role, may act as an acid--thiol ligase that activates carboxylic acids by forming acyl-CoAs. The sequence is that of Probable acyl-activating enzyme 9 (AEE9) from Arabidopsis thaliana (Mouse-ear cress).